Here is a 122-residue protein sequence, read N- to C-terminus: Large ribosomal subunit protein bL12 (122 aa).

Belongs to the bacterial ribosomal protein bL12 family. Homodimer. Part of the ribosomal stalk of the 50S ribosomal subunit. Forms a multimeric L10(L12)X complex, where L10 forms an elongated spine to which 2 to 4 L12 dimers bind in a sequential fashion. Binds GTP-bound translation factors.

Forms part of the ribosomal stalk which helps the ribosome interact with GTP-bound translation factors. Is thus essential for accurate translation. This chain is Large ribosomal subunit protein bL12, found in Actinobacillus succinogenes (strain ATCC 55618 / DSM 22257 / CCUG 43843 / 130Z).